A 328-amino-acid chain; its full sequence is Glycerol-3-phosphate dehydrogenase [NAD(P)+] (328 aa).

Tryptophan 15, arginine 35, and lysine 108 together coordinate NADPH. 3 residues coordinate sn-glycerol 3-phosphate: lysine 108, glycine 136, and serine 138. NADPH is bound at residue alanine 140. The sn-glycerol 3-phosphate site is built by lysine 191, aspartate 244, serine 254, arginine 255, and asparagine 256. Lysine 191 functions as the Proton acceptor in the catalytic mechanism. Residue arginine 255 participates in NADPH binding. Positions 275 and 277 each coordinate NADPH.

The protein belongs to the NAD-dependent glycerol-3-phosphate dehydrogenase family.

It is found in the cytoplasm. The enzyme catalyses sn-glycerol 3-phosphate + NAD(+) = dihydroxyacetone phosphate + NADH + H(+). It carries out the reaction sn-glycerol 3-phosphate + NADP(+) = dihydroxyacetone phosphate + NADPH + H(+). It functions in the pathway membrane lipid metabolism; glycerophospholipid metabolism. In terms of biological role, catalyzes the reduction of the glycolytic intermediate dihydroxyacetone phosphate (DHAP) to sn-glycerol 3-phosphate (G3P), the key precursor for phospholipid synthesis. The protein is Glycerol-3-phosphate dehydrogenase [NAD(P)+] of Azorhizobium caulinodans (strain ATCC 43989 / DSM 5975 / JCM 20966 / LMG 6465 / NBRC 14845 / NCIMB 13405 / ORS 571).